Reading from the N-terminus, the 80-residue chain is MSDNSIEEKVRSIIVDQLGVESDKVTADAKFIEDLGADSLDTVELVMAFEENFDIEVPDEEAEKLQSVADVVAYIEKVQG.

The Carrier domain maps to 4–79 (NSIEEKVRSI…DVVAYIEKVQ (76 aa)). The residue at position 39 (serine 39) is an O-(pantetheine 4'-phosphoryl)serine.

The protein belongs to the acyl carrier protein (ACP) family. Post-translationally, 4'-phosphopantetheine is transferred from CoA to a specific serine of apo-ACP by AcpS. This modification is essential for activity because fatty acids are bound in thioester linkage to the sulfhydryl of the prosthetic group.

Its subcellular location is the cytoplasm. It participates in lipid metabolism; fatty acid biosynthesis. Its function is as follows. Carrier of the growing fatty acid chain in fatty acid biosynthesis. The protein is Acyl carrier protein of Akkermansia muciniphila (strain ATCC BAA-835 / DSM 22959 / JCM 33894 / BCRC 81048 / CCUG 64013 / CIP 107961 / Muc).